Consider the following 461-residue polypeptide: Argininosuccinate lyase (461 aa).

Belongs to the lyase 1 family. Argininosuccinate lyase subfamily.

The protein resides in the cytoplasm. The catalysed reaction is 2-(N(omega)-L-arginino)succinate = fumarate + L-arginine. The protein operates within amino-acid biosynthesis; L-arginine biosynthesis; L-arginine from L-ornithine and carbamoyl phosphate: step 3/3. With respect to regulation, strongly inhibited by L-arginine. Inhibitory effects are lowered at pH 7.0 compared to those at pH 8.0. At 42 degrees Celsius and pH 8.0, activity decreases to 77% and 25% in the presence of 1 mM and 10 mM arginine, respectively. The other amino and organic acids do not affect activity. Catalyzes the last step of arginine biosynthesis, the conversion of argininosuccinate into L-arginine and fumarate. This is Argininosuccinate lyase from Nostoc sp. (strain PCC 7120 / SAG 25.82 / UTEX 2576).